The primary structure comprises 321 residues: Cysteine and histidine-rich domain-containing protein 1 (321 aa).

Residues cysteine 9, cysteine 14, cysteine 28, histidine 31, cysteine 46, cysteine 47, cysteine 63, histidine 68, cysteine 152, cysteine 157, cysteine 170, histidine 173, cysteine 188, cysteine 189, cysteine 205, and histidine 210 each coordinate Zn(2+). 2 CHORD domains span residues 9–68 (CYHK…RGKH) and 152–210 (CRNN…SGEH). In terms of domain architecture, CS spans 218–308 (VSKFREDWFS…KHGTGWPRLK (91 aa)).

Its function is as follows. Regulates centrosome duplication. Controls the secretion of the tyrosine kinase receptor let-23/EGFR from the endoplasmic reticulum and is required for the localization of let-23/EGFR to the plasma membrane of vulval precursor cells. It thus plays a role in positively regulating let/EGFR signaling, and anchor cell and vulval precursor cell alignment. Plays a role in vulval development and morphogenesis. This is Cysteine and histidine-rich domain-containing protein 1 from Caenorhabditis elegans.